Reading from the N-terminus, the 93-residue chain is NADH-ubiquinone oxidoreductase chain 4L (93 aa).

The next 3 membrane-spanning stretches (helical) occupy residues 3–23, 27–47, and 55–75; these read LTILLIIIGLIGYIINSGPLG, IIKLFISIEIMLLGVTLLIIL, and ILGLIIGIIVLIITGIESAIG.

The protein belongs to the complex I subunit 4L family.

Its subcellular location is the mitochondrion membrane. It catalyses the reaction a ubiquinone + NADH + 5 H(+)(in) = a ubiquinol + NAD(+) + 4 H(+)(out). In terms of biological role, core subunit of the mitochondrial membrane respiratory chain NADH dehydrogenase (Complex I) that is believed to belong to the minimal assembly required for catalysis. Complex I functions in the transfer of electrons from NADH to the respiratory chain. The immediate electron acceptor for the enzyme is believed to be ubiquinone. This is NADH-ubiquinone oxidoreductase chain 4L (ND4L) from Wickerhamomyces canadensis (Yeast).